A 419-amino-acid chain; its full sequence is MGEKKPEPLDFVKDFQEYLTQQTHHVNMISGSVSGDKEAEALQGAGTDGDQNGLDHPSVEVSLDENSGMLVDGFERTFDGKLKCRYCNYASKGTARLIEHIRIHTGEKPHRCHLCPFASAYERHLEAHMRSHTGEKPYKCELCSFRCSDRSNLSHHRRRKHKMVPIKGTRSSLSSKKMWGVLQKKTSNLNYSRRALINLSPPSMVVQKPDYLNDFTHEIPNIQTDSYESMAKTTPTGGLPRDPQELMVDNPLNQLSTLAGQLSSLPPENQNPASPDVVPCAEEKPFMMQQPSAQAVVSAVSASLPQSSSPASPEPRPPHGQRNYSPVAGPSSEPSAHTSTPSMGNSQPSTPAPTLPVQDPQLLHHCQHCDMYFADNILYTIHMGCHGYENPFQCNICGCKCKNKYDFACHFARGQHNQH.

Residue Lys-5 forms a Glycyl lysine isopeptide (Lys-Gly) (interchain with G-Cter in SUMO2) linkage. 3 consecutive C2H2-type zinc fingers follow at residues Leu-82–His-104, His-110–His-132, and Tyr-138–His-161. A Glycyl lysine isopeptide (Lys-Gly) (interchain with G-Cter in SUMO2) cross-link involves residue Lys-185. The span at Gln-223 to Thr-236 shows a compositional bias: polar residues. Disordered stretches follow at residues Gln-223–Glu-245 and Met-288–Pro-356. A compositionally biased stretch (low complexity) spans Gln-289 to Ala-311. The span at Ser-332–Ser-349 shows a compositional bias: polar residues. C2H2-type zinc fingers lie at residues His-364 to His-386 and Phe-392 to His-416.

This sequence belongs to the Ikaros C2H2-type zinc-finger protein family. As to quaternary structure, self-associates. Interacts with other family members; IKZF1, IKZF2, IKZF3 and IKZF4.

Its subcellular location is the nucleus. In terms of biological role, transcriptional repressor that binds the core 5'GNNTGTNG-3' DNA consensus sequence. Involved in megakaryocyte differentiation. This is Zinc finger protein Pegasus (IKZF5) from Bos taurus (Bovine).